A 236-amino-acid chain; its full sequence is 2-C-methyl-D-erythritol 4-phosphate cytidylyltransferase (236 aa).

It belongs to the IspD/TarI cytidylyltransferase family. IspD subfamily.

It carries out the reaction 2-C-methyl-D-erythritol 4-phosphate + CTP + H(+) = 4-CDP-2-C-methyl-D-erythritol + diphosphate. The protein operates within isoprenoid biosynthesis; isopentenyl diphosphate biosynthesis via DXP pathway; isopentenyl diphosphate from 1-deoxy-D-xylulose 5-phosphate: step 2/6. Its function is as follows. Catalyzes the formation of 4-diphosphocytidyl-2-C-methyl-D-erythritol from CTP and 2-C-methyl-D-erythritol 4-phosphate (MEP). In Pseudomonas syringae pv. syringae (strain B728a), this protein is 2-C-methyl-D-erythritol 4-phosphate cytidylyltransferase.